Here is a 224-residue protein sequence, read N- to C-terminus: Artemin (224 aa).

An N-terminal signal peptide occupies residues 1-39 (MELGLGEPTALSHCLRPRWQPALWPTLAALALLSSVTEA). A propeptide spanning residues 40-111 (SLDPMSRSPA…AALRGARAAR (72 aa)) is cleaved from the precursor. Positions 41 to 124 (LDPMSRSPAS…RSSRARATDA (84 aa)) are disordered. Residues 80-95 (RPPPQSPQPAPPPPGP) are compositionally biased toward pro residues. The span at 96–116 (ALQSPPAALRGARAARAGTRS) shows a compositional bias: low complexity. 3 disulfide bridges follow: Cys127-Cys192, Cys154-Cys220, and Cys158-Cys222. Asn206 carries an N-linked (GlcNAc...) asparagine glycan.

The protein belongs to the TGF-beta family. GDNF subfamily. As to quaternary structure, homodimer; disulfide-linked. Interacts with GFRA3 coreceptor and RET: forms a 2:2:2 ternary complex composed of ARTN ligand, GFRA3 and RET receptor. Cochlea. Expressed at higher level in sesorineural epithelium than in the modiolus region or substantia nigra.

The protein localises to the secreted. Functionally, growth factor that supports the survival of sensory and sympathetic peripheral neurons in culture and also supports the survival of dopaminergic neurons of the ventral mid-brain. Acts by binding to its coreceptor, GFRA3, leading to autophosphorylation and activation of the RET receptor. Strong attractant of gut hematopoietic cells thus promoting the formation Peyer's patch-like structures, a major component of the gut-associated lymphoid tissue. The polypeptide is Artemin (Artn) (Rattus norvegicus (Rat)).